Here is a 357-residue protein sequence, read N- to C-terminus: Glutamine synthetase root isozyme 5 (357 aa).

The GS beta-grasp domain occupies I19–G99. Residues K106–N357 form the GS catalytic domain.

This sequence belongs to the glutamine synthetase family. Homooctamer. As to expression, found mainly in the cortical tissues of seedling roots, stem and seedling shoot.

The protein resides in the cytoplasm. It carries out the reaction L-glutamate + NH4(+) + ATP = L-glutamine + ADP + phosphate + H(+). Its function is as follows. Plays a role in the flow of nitrogen into nitrogenous organic compounds. This chain is Glutamine synthetase root isozyme 5 (GS1-5), found in Zea mays (Maize).